Reading from the N-terminus, the 344-residue chain is UDP-3-O-acylglucosamine N-acyltransferase (344 aa).

His250 serves as the catalytic Proton acceptor.

This sequence belongs to the transferase hexapeptide repeat family. LpxD subfamily. In terms of assembly, homotrimer.

The enzyme catalyses a UDP-3-O-[(3R)-3-hydroxyacyl]-alpha-D-glucosamine + a (3R)-hydroxyacyl-[ACP] = a UDP-2-N,3-O-bis[(3R)-3-hydroxyacyl]-alpha-D-glucosamine + holo-[ACP] + H(+). The protein operates within bacterial outer membrane biogenesis; LPS lipid A biosynthesis. Catalyzes the N-acylation of UDP-3-O-acylglucosamine using 3-hydroxyacyl-ACP as the acyl donor. Is involved in the biosynthesis of lipid A, a phosphorylated glycolipid that anchors the lipopolysaccharide to the outer membrane of the cell. In Maricaulis maris (strain MCS10) (Caulobacter maris), this protein is UDP-3-O-acylglucosamine N-acyltransferase.